The chain runs to 306 residues: Phenylcoumaran benzylic ether reductase POP1 (306 aa).

NADP(+) contacts are provided by residues 9 to 15 (GGTGYIG), Arg-34, and Lys-43. The active-site Proton acceptor is the Lys-131. Arg-135 is a binding site for NADP(+).

Belongs to the NmrA-type oxidoreductase family. Isoflavone reductase subfamily.

The enzyme catalyses (-)-dehydrodiconiferyl alcohol + NADPH + H(+) = (S)-isodihydrodehydrodiconiferyl alcohol + NADP(+). It carries out the reaction (+)-dehydrodiconiferyl alcohol + NADPH + H(+) = (R)-isodihydrodehydrodiconiferyl alcohol + NADP(+). The catalysed reaction is (2R,3S)-dihydrodehydrodiconiferyl alcohol + NADPH + H(+) = (S)-tetrahydrodehydrodiconiferyl alcohol + NADP(+). It catalyses the reaction (2S,3R)-dihydrodehydrodiconiferyl alcohol + NADPH + H(+) = (R)-tetrahydrodehydrodiconiferyl alcohol + NADP(+). In terms of biological role, oxidoreductase involved in lignan biosynthesis. Catalyzes the NADPH-dependent reduction of phenylcoumaran benzylic ethers. Converts dehydrodiconiferyl alcohol (DDC) to isodihydrodehydrodiconiferyl alcohol (IDDDC), and dihydrodehydrodiconiferyl alcohol (DDDC) to tetrahydrodehydrodiconiferyl alcohol (TDDC). This Populus trichocarpa (Western balsam poplar) protein is Phenylcoumaran benzylic ether reductase POP1.